The chain runs to 421 residues: MPGSSRQSGREAGSALLSLQQEDQENVNPEKAAPDQRARAALKTGNARGNAPQQRLKARRVAPLKDLSINDEHVASGPSWKAASKQPAFTIHVDEEEDTQKIPPEHKEMRCEDALAFNAAVSLPGARKPLVPLDYPMDGSFESPHAMDMSIVLEEEKPVSVNEVPDYHEDIHTYLREMEIKCKPKVGYMKKQPDITNSMRAILVDWLVEVGEEYKLQNETLHLAVNYIDRFLSSMSVLRGKLQLVGTAAMLLASKFEEIYPPEVAEFVYITDDTYSKKQVLRMEHLVLKVLAFDLAAPTVNQFLNQYFLHQQPANCKVESLAMFLGELSLIDADPYLKYLPSLIAGAAFHLALYTVTGQSWPESLVQKTGYTLESLKPCLMDLHQTYLRAAQHTQQSIREKYKHSKYHGVSLLNPPETLNV.

M1 carries the N-acetylmethionine modification. Residues 1 to 60 (MPGSSRQSGREAGSALLSLQQEDQENVNPEKAAPDQRARAALKTGNARGNAPQQRLKARR) form a disordered region. Phosphoserine is present on S5.

This sequence belongs to the cyclin family. Cyclin AB subfamily. In terms of assembly, interacts with the CDK1 and CDK2 protein kinases to form serine/threonine kinase holoenzyme complexes. Interacts with CDK1 (hyperphosphorylated form in G1 and underphosphorylated forms in S and G2). Interacts with CDK2; the interaction increases from G1 to G2. Interacts (associated with CDK2 but not with CDK1) with SCAPER; regulates the activity of CCNA2/CDK2 by transiently maintaining CCNA2 in the cytoplasm. Forms a ternary complex with CDK2 and CDKN1B; CDKN1B inhibits the kinase activity of CDK2 through conformational rearrangements. Interacts with INCA1. Post-translationally, polyubiquitinated via 'Lys-11'-linked ubiquitin by the anaphase-promoting complex (APC/C), leading to its degradation by the proteasome. Deubiquitinated and stabilized by USP37 enables entry into S phase. Ubiquitinated during the G1 phase by the SCF(FBXO31) complex, leading to its proteasomal degradation.

The protein resides in the nucleus. Its subcellular location is the cytoplasm. In terms of biological role, cyclin which controls both the G1/S and the G2/M transition phases of the cell cycle. Functions through the formation of specific serine/threonine kinase holoenzyme complexes with the cyclin-dependent protein kinases CDK1 and CDK2. The cyclin subunit confers the substrate specificity of these complexes and differentially interacts with and activates CDK1 and CDK2 throughout the cell cycle. This chain is Cyclin-A2, found in Mesocricetus auratus (Golden hamster).